We begin with the raw amino-acid sequence, 270 residues long: tRNA pseudouridine synthase A (270 aa).

D60 serves as the catalytic Nucleophile. Residues F107 to F111 form an RNA binding region. Y118 is a substrate binding site. The tract at residues Q168–R172 is interaction with tRNA.

Belongs to the tRNA pseudouridine synthase TruA family. As to quaternary structure, homodimer.

It catalyses the reaction uridine(38/39/40) in tRNA = pseudouridine(38/39/40) in tRNA. Its function is as follows. Formation of pseudouridine at positions 38, 39 and 40 in the anticodon stem and loop of transfer RNAs. In Escherichia coli (strain 55989 / EAEC), this protein is tRNA pseudouridine synthase A.